A 199-amino-acid chain; its full sequence is NAD(P)H dehydrogenase (quinone) (199 aa).

In terms of domain architecture, Flavodoxin-like spans 4-190 (VLVLYYSTYG…DGARFLGQHV (187 aa)). FMN contacts are provided by residues 10–15 (STYGHI) and 78–80 (TRF). Tyrosine 12 is an NAD(+) binding site. Tryptophan 98 contributes to the substrate binding site. FMN-binding positions include 113–119 (STATQHG) and histidine 134.

The protein belongs to the WrbA family. FMN is required as a cofactor.

It carries out the reaction a quinone + NADH + H(+) = a quinol + NAD(+). The enzyme catalyses a quinone + NADPH + H(+) = a quinol + NADP(+). This chain is NAD(P)H dehydrogenase (quinone), found in Gluconacetobacter diazotrophicus (strain ATCC 49037 / DSM 5601 / CCUG 37298 / CIP 103539 / LMG 7603 / PAl5).